Reading from the N-terminus, the 503-residue chain is MAAALRFDNIGKVFPGVRALDGISFDVQAGQVHGLMGENGAGKSTLLKILGGEYQPDSGSVLVDGRAMRFPSAAASIAAGVAVIHQELQYVPDLTVAENLLLGRLPSALGWVRKRDAQRFVRERLAAMGVDLDAQAKLRRLSIAQRQMVEICKALLRNARVIALDEPTSSLSHRETEVLFKLVDDLRRDGRALIYISHRMDEIYRLCDACTIFRDGRQVASHASLANVPRETLVRQMVGREISDIYHYAPRALGDVRLSARALEGDALRAGASFDVRAGEIVGFFGLVGAGRSELMRVIYGAQRRTGGALTLDGEPLDIRSTRDAIRRGIVLCPEDRKEEGIVAHASVAENINISCRRHGLRAGLFLDRKREAETADRFIKLLKIKTPNRRQKIRFLSGGNQQKAILARWLAEPDLKVVILDEPTRGIDVGAKHEIYGVIYELAKRGCAIVMVSSELPEVLGVSDRIVVMSEGRIAGELARGEANEEAVLNLALPQGATAHAA.

ABC transporter domains are found at residues 5–240 (LRFD…MVGR) and 253–497 (LGDV…LPQG). ATP is bound at residue 37 to 44 (GENGAGKS).

It belongs to the ABC transporter superfamily. Arabinose importer (TC 3.A.1.2.2) family. The complex is composed of two ATP-binding proteins (AraG), two transmembrane proteins (AraH) and a solute-binding protein (AraF).

The protein localises to the cell inner membrane. The enzyme catalyses L-arabinose(out) + ATP + H2O = L-arabinose(in) + ADP + phosphate + H(+). In terms of biological role, part of the ABC transporter complex AraFGH involved in arabinose import. Responsible for energy coupling to the transport system. The polypeptide is Arabinose import ATP-binding protein AraG (Burkholderia pseudomallei (strain K96243)).